Consider the following 306-residue polypeptide: Putative S-adenosyl-L-methionine-dependent methyltransferase MAV_4442 (306 aa).

Residues aspartate 129 and 158–159 (DL) contribute to the S-adenosyl-L-methionine site.

Belongs to the UPF0677 family.

Its function is as follows. Exhibits S-adenosyl-L-methionine-dependent methyltransferase activity. This Mycobacterium avium (strain 104) protein is Putative S-adenosyl-L-methionine-dependent methyltransferase MAV_4442.